Here is a 251-residue protein sequence, read N- to C-terminus: L-xylulose reductase (251 aa).

13–42 is an NADP(+) binding site; the sequence is LVTGASQGIGKEICLSLAKAGAQVIAFARN. Ser-143 provides a ligand contact to substrate. Residue Tyr-156 is the Proton acceptor of the active site. Lys-160 is an NADP(+) binding site.

It belongs to the short-chain dehydrogenases/reductases (SDR) family. Homotetramer. Expressed in intestine, gonad and spermatids (at protein level). Expressed in intestine, uterine seam, gonadal sheath cells, spermathecal-uterus valve and spermatids.

It is found in the cell membrane. It carries out the reaction xylitol + NADP(+) = L-xylulose + NADPH + H(+). With respect to regulation, strongly inhibited by 10% dimethyl sulfoxide. Functionally, catalyzes the NADPH-dependent reduction of L-xylulose, D-xylulose, L-(+) erythrulose, D-erythrose, D-threose, L-ribulose, 1,4-dibromo-2,3-butanedione and 2,3-heptanedione. Also active against isatin, 9,10-phenanthrenequinone, menadione, 2,3-hexaenadione and 3,4-hexahenadione. No activity observed when tested using NADH rather than NADPH. The protein is L-xylulose reductase of Caenorhabditis elegans.